A 387-amino-acid polypeptide reads, in one-letter code: Chaperone protein DnaJ (387 aa).

The J domain maps to 6–71 (DYYEILGVPR…EKRRKYDQFG (66 aa)). The CR-type zinc-finger motif lies at 146-228 (GCEKEIPIYR…CGGTGTVRRQ (83 aa)). 8 residues coordinate Zn(2+): cysteine 159, cysteine 162, cysteine 176, cysteine 179, cysteine 202, cysteine 205, cysteine 216, and cysteine 219. 4 CXXCXGXG motif repeats span residues 159–166 (CSVCGGSG), 176–183 (CQKCGGTG), 202–209 (CDACGGVG), and 216–223 (CRECGGTG).

The protein belongs to the DnaJ family. Homodimer. Zn(2+) is required as a cofactor.

It is found in the cytoplasm. Its function is as follows. Participates actively in the response to hyperosmotic and heat shock by preventing the aggregation of stress-denatured proteins and by disaggregating proteins, also in an autonomous, DnaK-independent fashion. Unfolded proteins bind initially to DnaJ; upon interaction with the DnaJ-bound protein, DnaK hydrolyzes its bound ATP, resulting in the formation of a stable complex. GrpE releases ADP from DnaK; ATP binding to DnaK triggers the release of the substrate protein, thus completing the reaction cycle. Several rounds of ATP-dependent interactions between DnaJ, DnaK and GrpE are required for fully efficient folding. Also involved, together with DnaK and GrpE, in the DNA replication of plasmids through activation of initiation proteins. This is Chaperone protein DnaJ from Caldicellulosiruptor saccharolyticus (strain ATCC 43494 / DSM 8903 / Tp8T 6331).